We begin with the raw amino-acid sequence, 103 residues long: Trp operon repressor homolog (103 aa).

Residues 59-82 mediate DNA binding; it reads QRQISQMLGVGIATITRGSNELKS.

The protein belongs to the TrpR family. As to quaternary structure, homodimer.

Its subcellular location is the cytoplasm. Functionally, this protein is an aporepressor. When complexed with L-tryptophan it binds the operator region of the trp operon and prevents the initiation of transcription. The protein is Trp operon repressor homolog of Vibrio parahaemolyticus serotype O3:K6 (strain RIMD 2210633).